The chain runs to 150 residues: Protein A151R (150 aa).

This sequence belongs to the asfivirus A151R family. As to quaternary structure, monomer. Homodimer. Interacts with protein B119L. Interacts with membrane protein E248R. The cofactor is Zn(2+).

May participate in a redox cascade for the formation of disulfide bonds in viral proteins. This African swine fever virus (isolate Tick/Malawi/Lil 20-1/1983) (ASFV) protein is Protein A151R.